We begin with the raw amino-acid sequence, 227 residues long: MGYLKWLGHAAFEVELMGKRILIDPWISNPNSPVTLGELSKVDFILVTHDHSDHLGEAVQIANKTNATVVSIFELAVYLAEKEGVKNTIGMNIGGPVKLTNEIEVYMTPALHSSTHGSPVGFVIKSPEAVIYHAGDTGLFSDMELIGRLYKPDVALLPIGGYFTMSPREAAYAVSLINPRAVVPMHYNTFPQIRQDPEEFRNLTESLAPHVRVYVMKPGDVLNLPIK.

This sequence belongs to the UPF0173 family.

The sequence is that of UPF0173 metal-dependent hydrolase Cmaq_1073 from Caldivirga maquilingensis (strain ATCC 700844 / DSM 13496 / JCM 10307 / IC-167).